We begin with the raw amino-acid sequence, 317 residues long: CXXC-type zinc finger protein 5 (317 aa).

Over residues 1–10 the composition is skewed to gly residues; it reads MSSLGGGSQD. The disordered stretch occupies residues 1 to 92; sequence MSSLGGGSQD…SFGSSGGGGS (92 aa). 2 stretches are compositionally biased toward low complexity: residues 11–27 and 36–51; these read AGGSSSSSNTNSSSGSG and STAVAATTAPTSVADD. The CXXC-type zinc finger occupies 251-292; the sequence is GKKKRKRCGMCAPCRRRINCEQCSSCRNRKTGHQICKFRKCE. Residues 252–257 carry the Nuclear localization signal motif; the sequence is KKKRKR. Residues Cys258, Cys261, Cys264, Cys270, Cys273, Cys276, Cys286, and Cys291 each coordinate Zn(2+).

In terms of assembly, interacts with DVL1. Interacts with RBPJ.

The protein resides in the nucleus. It is found in the cytoplasm. May indirectly participate in activation of the NF-kappa-B and MAPK pathways. Acts as a mediator of BMP4-mediated modulation of canonical Wnt signaling activity in neural stem cells. Required for DNA damage-induced ATM phosphorylation, p53 activation and cell cycle arrest. Involved in myelopoiesis. Binds to the oxygen responsive element of COX4I2 and represses its transcription under hypoxia conditions (4% oxygen), as well as normoxia conditions (20% oxygen). May repress COX4I2 transactivation induced by CHCHD2 and RBPJ. Binds preferentially to DNA containing cytidine-phosphate-guanosine (CpG) dinucleotides over CpH (H=A, T, and C), hemimethylated-CpG and hemimethylated-hydroxymethyl-CpG. This chain is CXXC-type zinc finger protein 5 (Cxxc5), found in Mus musculus (Mouse).